Here is a 394-residue protein sequence, read N- to C-terminus: Elongation factor Tu (394 aa).

A tr-type G domain is found at 10-204; the sequence is KPHVNVGTIG…ALDSYIPEPQ (195 aa). The interval 19–26 is G1; sequence GHVDHGKT. A GTP-binding site is contributed by 19–26; that stretch reads GHVDHGKT. Thr26 lines the Mg(2+) pocket. The G2 stretch occupies residues 60–64; the sequence is GITIN. Positions 81 to 84 are G3; sequence DCPG. Residues 81 to 85 and 136 to 139 contribute to the GTP site; these read DCPGH and NKCD. The tract at residues 136 to 139 is G4; sequence NKCD. The interval 174–176 is G5; the sequence is SAL.

This sequence belongs to the TRAFAC class translation factor GTPase superfamily. Classic translation factor GTPase family. EF-Tu/EF-1A subfamily. In terms of assembly, monomer.

Its subcellular location is the cytoplasm. The catalysed reaction is GTP + H2O = GDP + phosphate + H(+). Functionally, GTP hydrolase that promotes the GTP-dependent binding of aminoacyl-tRNA to the A-site of ribosomes during protein biosynthesis. The sequence is that of Elongation factor Tu from Shewanella putrefaciens (Pseudomonas putrefaciens).